A 414-amino-acid chain; its full sequence is MADISYWTLLVPPLAGGVIGYFTNDLAITMLFRPYKPIYIGGKQVPFTPGLIPRNQERLARRIADAILGSLLTPEELQNLARRLLQVQRVKAVIHWLLQTSLSQIQAQSEQRSAQVLANILRDFFGSALPRLMKVWSRREDFLEPQLNQLFDQVLVELQLSDEQAEKLADWLLSVMLPPDRLRLAIIDFLTDRTINVLDQELRQNTSGTYWVVANLVGVRNTLIRLREYCLNEREACNRRLGDLITALALRQRLVEALQNLTLQSLPLGTVRELRQLFRQTVRSYIQEQGASVIETVSQTVEWETISLSILRRLRDSASLGASLEVVSDELALVLDRYLERDMELIVERAIPILDLDRVIVDRVKATSPENLELAIQGIVRSELQAIVRLGGILGFLIGVVQAGVLYWQSLQVP.

Helical transmembrane passes span 2-22 (ADIS…IGYF) and 386-406 (AIVR…AGVL).

This sequence belongs to the UPF0754 family.

Its subcellular location is the cell inner membrane. The chain is UPF0754 membrane protein tlr2287 from Thermosynechococcus vestitus (strain NIES-2133 / IAM M-273 / BP-1).